The following is a 581-amino-acid chain: Pyridine nucleotide-disulfide oxidoreductase domain-containing protein 2 (581 aa).

38–71 (VVIGAGHNGLVVAAYLQRLGVNTAVFERRHVIGG) lines the FAD pocket.

This sequence belongs to the carotenoid/retinoid oxidoreductase family. Interacts with COX5B; this interaction may contribute to localize PYROXD2 to the inner face of the inner mitochondrial membrane.

The protein resides in the mitochondrion matrix. Functionally, probable oxidoreductase that may play a role as regulator of mitochondrial function. This is Pyridine nucleotide-disulfide oxidoreductase domain-containing protein 2 from Pongo abelii (Sumatran orangutan).